The chain runs to 261 residues: Ribosomal RNA small subunit methyltransferase A (261 aa).

H12, L14, G39, E60, D81, and N104 together coordinate S-adenosyl-L-methionine.

The protein belongs to the class I-like SAM-binding methyltransferase superfamily. rRNA adenine N(6)-methyltransferase family. RsmA subfamily.

It localises to the cytoplasm. The enzyme catalyses adenosine(1518)/adenosine(1519) in 16S rRNA + 4 S-adenosyl-L-methionine = N(6)-dimethyladenosine(1518)/N(6)-dimethyladenosine(1519) in 16S rRNA + 4 S-adenosyl-L-homocysteine + 4 H(+). Its function is as follows. Specifically dimethylates two adjacent adenosines (A1518 and A1519) in the loop of a conserved hairpin near the 3'-end of 16S rRNA in the 30S particle. May play a critical role in biogenesis of 30S subunits. The chain is Ribosomal RNA small subunit methyltransferase A from Albidiferax ferrireducens (strain ATCC BAA-621 / DSM 15236 / T118) (Rhodoferax ferrireducens).